A 375-amino-acid chain; its full sequence is Queuine tRNA-ribosyltransferase (375 aa).

D89 serves as the catalytic Proton acceptor. Residues 89 to 93 (DSGGF), D143, Q187, and G214 each bind substrate. The interval 245–251 (GVGKPED) is RNA binding. The active-site Nucleophile is the D264. The segment at 269-273 (TRNAR) is RNA binding; important for wobble base 34 recognition. 4 residues coordinate Zn(2+): C302, C304, C307, and H333.

This sequence belongs to the queuine tRNA-ribosyltransferase family. Homodimer. Within each dimer, one monomer is responsible for RNA recognition and catalysis, while the other monomer binds to the replacement base PreQ1. The cofactor is Zn(2+).

The enzyme catalyses 7-aminomethyl-7-carbaguanine + guanosine(34) in tRNA = 7-aminomethyl-7-carbaguanosine(34) in tRNA + guanine. The protein operates within tRNA modification; tRNA-queuosine biosynthesis. Its function is as follows. Catalyzes the base-exchange of a guanine (G) residue with the queuine precursor 7-aminomethyl-7-deazaguanine (PreQ1) at position 34 (anticodon wobble position) in tRNAs with GU(N) anticodons (tRNA-Asp, -Asn, -His and -Tyr). Catalysis occurs through a double-displacement mechanism. The nucleophile active site attacks the C1' of nucleotide 34 to detach the guanine base from the RNA, forming a covalent enzyme-RNA intermediate. The proton acceptor active site deprotonates the incoming PreQ1, allowing a nucleophilic attack on the C1' of the ribose to form the product. After dissociation, two additional enzymatic reactions on the tRNA convert PreQ1 to queuine (Q), resulting in the hypermodified nucleoside queuosine (7-(((4,5-cis-dihydroxy-2-cyclopenten-1-yl)amino)methyl)-7-deazaguanosine). The polypeptide is Queuine tRNA-ribosyltransferase (Escherichia coli O81 (strain ED1a)).